The following is a 200-amino-acid chain: BREX protein BrxB (200 aa).

Belongs to the BrxB family.

Its function is as follows. BREX systems (bacteriophage exclusion) provide immunity against bacteriophage. Part of a type 1 BREX system which protects against dsDNA phage. This system allows phage adsorption but prevents phage DNA replication, without degradation of the phage DNA. Methylation of bacterial DNA by PglX guides self/non-self discrimination. When the brxA-brxB-brxC-pglX-pglZ-brxL genes are transformed into a susceptible E.coli strain (BW25113) they confer very high resistance to infection by bacteriophage VR7 and VpaE1, about 100-fold protection against lambda, T5 and T7 and no protection against RNA phage Qbeta, ssDNA phage M13 or dSDNA phage T4 and VR5. Glycosylated phage DNA is not susceptible to BREX. The BREX system does not confer resistance to lysogenic lambda phage, i.e. prophage that are integrated into the chromosomal DNA and then induced to form phage. This Escherichia coli O9:H4 (strain HS) protein is BREX protein BrxB.